We begin with the raw amino-acid sequence, 183 residues long: Inner membrane-spanning protein YciB (183 aa).

A run of 5 helical transmembrane segments spans residues 22–44 (IYTA…WVRY), 54–74 (TFLL…DAFI), 76–96 (WKVT…RYGF), 119–139 (VNLA…YVAF), and 149–169 (FKVF…GVYL).

It belongs to the YciB family.

Its subcellular location is the cell inner membrane. Functionally, plays a role in cell envelope biogenesis, maintenance of cell envelope integrity and membrane homeostasis. The chain is Inner membrane-spanning protein YciB from Aeromonas salmonicida (strain A449).